Reading from the N-terminus, the 262-residue chain is Ankyrin repeat domain-containing protein 7 (262 aa).

ANK repeat units lie at residues lysine 67–isoleucine 96, glutamate 100–leucine 129, arginine 133–alanine 162, aspartate 166–alanine 195, and tyrosine 199–cysteine 228.

The sequence is that of Ankyrin repeat domain-containing protein 7 (ANKRD7) from Macaca fascicularis (Crab-eating macaque).